Here is an 89-residue protein sequence, read N- to C-terminus: Small ribosomal subunit protein uS15 (89 aa).

It belongs to the universal ribosomal protein uS15 family. In terms of assembly, part of the 30S ribosomal subunit. Forms a bridge to the 50S subunit in the 70S ribosome, contacting the 23S rRNA.

One of the primary rRNA binding proteins, it binds directly to 16S rRNA where it helps nucleate assembly of the platform of the 30S subunit by binding and bridging several RNA helices of the 16S rRNA. Its function is as follows. Forms an intersubunit bridge (bridge B4) with the 23S rRNA of the 50S subunit in the ribosome. In Bordetella avium (strain 197N), this protein is Small ribosomal subunit protein uS15.